A 182-amino-acid chain; its full sequence is Adenylate kinase (182 aa).

12–17 (GAGKGT) is a binding site for ATP. The interval 32-61 (STGELLRKEIEMNTNLGIQVKDIMNRGELV) is NMP. Residues Thr33, Arg38, 59–61 (ELV), 85–88 (GYPR), and Gln92 each bind AMP. An LID region spans residues 126–132 (LRGRKDD). Arg127 serves as a coordination point for ATP. Residues Arg129 and Arg140 each coordinate AMP. Arg168 lines the ATP pocket.

It belongs to the adenylate kinase family. In terms of assembly, monomer.

The protein resides in the cytoplasm. It catalyses the reaction AMP + ATP = 2 ADP. Its pathway is purine metabolism; AMP biosynthesis via salvage pathway; AMP from ADP: step 1/1. In terms of biological role, catalyzes the reversible transfer of the terminal phosphate group between ATP and AMP. Plays an important role in cellular energy homeostasis and in adenine nucleotide metabolism. This chain is Adenylate kinase, found in Prochlorococcus marinus (strain AS9601).